The following is a 143-amino-acid chain: MAKKIQAYIKLQVKAGQANPSPPVGPALGQHGVNIMEFCKAFNARTQGQEPGLPTPVIITVYSDRSFTFETKSTPASVLLKKAAGLTSGSARPNTVKVGTVTRAQLEDIAKAKQADLTAADLDAAVRTIAGSARSMGLNVEGV.

The protein belongs to the universal ribosomal protein uL11 family. Part of the ribosomal stalk of the 50S ribosomal subunit. Interacts with L10 and the large rRNA to form the base of the stalk. L10 forms an elongated spine to which L12 dimers bind in a sequential fashion forming a multimeric L10(L12)X complex. One or more lysine residues are methylated.

Functionally, forms part of the ribosomal stalk which helps the ribosome interact with GTP-bound translation factors. The polypeptide is Large ribosomal subunit protein uL11 (Pseudomonas entomophila (strain L48)).